The primary structure comprises 511 residues: Probable cytosol aminopeptidase (511 aa).

Mn(2+) contacts are provided by Lys-255 and Asp-260. Residue Lys-267 is part of the active site. The Mn(2+) site is built by Asp-278, Asp-337, and Glu-339. Residue Arg-341 is part of the active site. A disordered region spans residues Gly-485 to Gln-511.

This sequence belongs to the peptidase M17 family. Requires Mn(2+) as cofactor.

Its subcellular location is the cytoplasm. The catalysed reaction is Release of an N-terminal amino acid, Xaa-|-Yaa-, in which Xaa is preferably Leu, but may be other amino acids including Pro although not Arg or Lys, and Yaa may be Pro. Amino acid amides and methyl esters are also readily hydrolyzed, but rates on arylamides are exceedingly low.. The enzyme catalyses Release of an N-terminal amino acid, preferentially leucine, but not glutamic or aspartic acids.. Functionally, presumably involved in the processing and regular turnover of intracellular proteins. Catalyzes the removal of unsubstituted N-terminal amino acids from various peptides. In Variovorax paradoxus (strain S110), this protein is Probable cytosol aminopeptidase.